Consider the following 554-residue polypeptide: Sesquithujene synthase A (554 aa).

Mg(2+)-binding residues include Asp308 and Asp312. Substrate-binding residues include Asp308 and Asp312. Positions 308-312 match the DDXXD motif motif; sequence DDMFD. The interval 407–411 is determine the stereoselectivity of the enzyme; sequence SIGAN. The substrate site is built by Arg449 and Asn452. The Mg(2+) site is built by Asn452, Ser456, and Glu460.

Belongs to the terpene synthase family. As to quaternary structure, monomer. Mg(2+) is required as a cofactor. It depends on Mn(2+) as a cofactor. Highly expressed in the husk. Detected in leaves.

It localises to the cytoplasm. It catalyses the reaction (2E,6E)-farnesyl diphosphate = sesquithujene + diphosphate. The catalysed reaction is (2Z,6Z)-farnesyl diphosphate = (1S,5S,6S)-alpha-bergamotene + diphosphate. It carries out the reaction (2E,6E)-farnesyl diphosphate = (E)-beta-farnesene + diphosphate. The enzyme catalyses (2E,6E)-farnesyl diphosphate = (S)-beta-bisabolene + diphosphate. It catalyses the reaction (2Z,6E)-farnesyl diphosphate = (-)-beta-curcumene + diphosphate. The catalysed reaction is (2E,6E)-farnesyl diphosphate = gamma-curcumene + diphosphate. It carries out the reaction (2E,6E)-farnesyl diphosphate = sesquisabinene B + diphosphate. Its pathway is secondary metabolite biosynthesis; terpenoid biosynthesis. In terms of biological role, sesquiterpene synthase involved in the production after herbivore attack of a blend of volatiles that attracts natural enemies of herbivores. Converts farnesyl diphosphate to sesquithujene, (S)-beta-bisabolene, (Z)-alpha-bergamotene, sesquisabinene B and several minor products. Can also act in vitro as a monoterpene synthase, converting geranyl diphosphate to (S)-(-)-limonene, beta-myrcene and 11 other monoterpenes. This chain is Sesquithujene synthase A, found in Zea mays (Maize).